The chain runs to 99 residues: Large ribosomal subunit protein eL36A (99 aa).

It belongs to the eukaryotic ribosomal protein eL36 family. Component of the large ribosomal subunit (LSU). Mature yeast ribosomes consist of a small (40S) and a large (60S) subunit. The 40S small subunit contains 1 molecule of ribosomal RNA (18S rRNA) and at least 33 different proteins. The large 60S subunit contains 3 rRNA molecules (25S, 5.8S and 5S rRNA) and at least 46 different proteins.

The protein localises to the cytoplasm. Component of the ribosome, a large ribonucleoprotein complex responsible for the synthesis of proteins in the cell. The small ribosomal subunit (SSU) binds messenger RNAs (mRNAs) and translates the encoded message by selecting cognate aminoacyl-transfer RNA (tRNA) molecules. The large subunit (LSU) contains the ribosomal catalytic site termed the peptidyl transferase center (PTC), which catalyzes the formation of peptide bonds, thereby polymerizing the amino acids delivered by tRNAs into a polypeptide chain. The nascent polypeptides leave the ribosome through a tunnel in the LSU and interact with protein factors that function in enzymatic processing, targeting, and the membrane insertion of nascent chains at the exit of the ribosomal tunnel. The sequence is that of Large ribosomal subunit protein eL36A (rpl3601) from Schizosaccharomyces pombe (strain 972 / ATCC 24843) (Fission yeast).